A 478-amino-acid chain; its full sequence is Septin-4 (478 aa).

The interval 1 to 115 is disordered; it reads MDRSLGWQGN…RSPWGKLDPY (115 aa). Residues 13 to 26 show a composition bias toward basic and acidic residues; it reads PEDRTEAGIKRFLE. Over residues 95-108 the composition is skewed to low complexity; sequence APAPLSPSARPRSP. 2 positions are modified to phosphoserine: S117 and S118. Residues 141-414 form the Septin-type G domain; the sequence is KGFDFTLMVA…ENYRAQCIQS (274 aa). The segment at 151-158 is G1 motif; it reads GESGLGKS. GTP is bound by residues 151-158 and T185; that span reads GESGLGKS. A G3 motif region spans residues 208 to 211; the sequence is DTPG. Residues 289–292 are G4 motif; the sequence is AKAD. 290–298 lines the GTP pocket; that stretch reads KADTLTPPE. S325 bears the Phosphoserine mark. Residues G348 and R363 each contribute to the GTP site. Residues 428-448 form a disordered region; it reads LTRESGTDFPIPAVPPGTDPE. S432 bears the Phosphoserine mark. T434 carries the post-translational modification Phosphothreonine. The stretch at 447 to 478 forms a coiled coil; sequence PETEKLIREKDEELRRMQEMLHKIQKQMKENY.

This sequence belongs to the TRAFAC class TrmE-Era-EngA-EngB-Septin-like GTPase superfamily. Septin GTPase family. Septins polymerize into heterooligomeric protein complexes that form filaments, and can associate with cellular membranes, actin filaments and microtubules. GTPase activity is required for filament formation. Interacts with SEPTIN8. In a mesenchymal cell line, interacts with SEPTIN9 isoform 2 variants HNA Trp-106 and Phe-111, but not the wild type SEPTIN9. Component of a septin core octameric complex consisting of SEPTIN12, SEPTIN7, SEPTIN6 and SEPTIN2 or SEPTIN4 in the order 12-7-6-2-2-6-7-12 or 12-7-6-4-4-6-7-12. Interacts with SEPTIN14 (via C-terminus). Interacts with DYRK1A. Interacts with SLC6A3/DAT and SNCA/alpha-synuclein. Interacts with STX1A; in the striatum. Interacts with XIAP (via BIR3 domain) following the induction of apoptosis. Interacts with AREL1 (via HECT domain); in the cytoplasm following induction of apoptosis. As to quaternary structure, part of a complex composed of SEPTIN4 isoform ARTS, XIAP and BCL2, within the complex interacts with both BCL2 (via BH3 domain) and XIAP, ARTS acts as a scaffold protein and stabilizes the complex. Interacts with XIAP (via BIR3 domain) following the induction of apoptosis. Phosphorylated by DYRK1A. In terms of processing, ubiquitinated by AREL1. As to expression, widely expressed in adult and fetal tissues with highest expression in adult brain (at protein level), heart, liver and adrenal gland and fetal heart, kidney, liver and lung. Expressed in presynaptic terminals of dopaminergic neurons projecting from the substantia nigra pars compacta to the striatum (at protein level). Expressed in axonal varicosities in dopaminergic nerve terminals (at protein level). Expressed in the putamen and in the adjacent cerebral cortex (at protein level). Expressed in colonic crypts (at protein level). Also expressed in colorectal cancers and malignant melanomas. Expressed in platelets. Highly expressed in the brain and heart.

It localises to the cytoplasm. The protein resides in the cell projection. Its subcellular location is the cilium. The protein localises to the flagellum. It is found in the cytoplasmic vesicle. It localises to the secretory vesicle. The protein resides in the axon. Its subcellular location is the dendrite. The protein localises to the perikaryon. It is found in the synapse. It localises to the mitochondrion. The protein resides in the nucleus. Its function is as follows. Filament-forming cytoskeletal GTPase. Pro-apoptotic protein involved in LGR5-positive intestinal stem cell and Paneth cell expansion in the intestines, via its interaction with XIAP. May also play a role in the regulation of cell fate in the intestine. Positive regulator of apoptosis involved in hematopoietic stem cell homeostasis; via its interaction with XIAP. Negative regulator of repair and hair follicle regeneration in response to injury, due to inhibition of hair follicle stem cell proliferation, potentially via its interaction with XIAP. Plays an important role in male fertility and sperm motility. During spermiogenesis, essential for the establishment of the annulus (a fibrous ring structure connecting the midpiece and the principal piece of the sperm flagellum) which is a requisite for the structural and mechanical integrity of the sperm. Involved in the migration of cortical neurons and the formation of neuron leading processes during embryonic development. Required for dopaminergic metabolism in presynaptic autoreceptors; potentially via activity as a presynaptic scaffold protein. Functionally, required for the induction of cell death mediated by TGF-beta and possibly by other apoptotic stimuli. Induces apoptosis through binding and inhibition of XIAP resulting in significant reduction in XIAP levels, leading to caspase activation and cell death. Mediates the interaction between BCL2 and XIAP, thereby positively regulating the ubiquitination and degradation of BCL2 and promoting apoptosis. This Homo sapiens (Human) protein is Septin-4.